The following is a 59-amino-acid chain: Potassium channel toxin alpha-KTx 16.7 (59 aa).

The N-terminal stretch at 1–22 is a signal peptide; it reads MKILSILLIALVICSISICTEA. 3 disulfide bridges follow: Cys-30-Cys-51, Cys-36-Cys-56, and Cys-40-Cys-58.

The protein belongs to the short scorpion toxin superfamily. Potassium channel inhibitor family. Alpha-KTx 16 subfamily. As to expression, expressed by the venom gland.

The protein resides in the secreted. May play a role in blocking voltage-gated potassium channels Kv1.2/KCNA2, and Kv1.3/KCNA3. Blocks the voltage-gated potassium channel Kv1.3/KCNA3, with an IC(50) of 118.3 +-55.8 nM. This is Potassium channel toxin alpha-KTx 16.7 from Mesobuthus gibbosus (Mediterranean checkered scorpion).